Reading from the N-terminus, the 269-residue chain is Glutamate 5-kinase (269 aa).

K14 provides a ligand contact to ATP. Positions 54, 141, and 157 each coordinate substrate. Residues 177 to 178 (SD) and 219 to 225 (TGGMVTK) contribute to the ATP site.

This sequence belongs to the glutamate 5-kinase family.

The protein resides in the cytoplasm. The enzyme catalyses L-glutamate + ATP = L-glutamyl 5-phosphate + ADP. It participates in amino-acid biosynthesis; L-proline biosynthesis; L-glutamate 5-semialdehyde from L-glutamate: step 1/2. In terms of biological role, catalyzes the transfer of a phosphate group to glutamate to form L-glutamate 5-phosphate. In Clostridium perfringens (strain 13 / Type A), this protein is Glutamate 5-kinase.